A 192-amino-acid polypeptide reads, in one-letter code: uncharacterized protein (192 aa).

Residues 53-111 (CLKESVERARKVYLSLLKDYERKSREYEKAYENYLKELRTYRETLYRIKEDLKFYERIC) are a coiled coil.

This is an uncharacterized protein from Aquifex aeolicus (strain VF5).